We begin with the raw amino-acid sequence, 308 residues long: tRNA pseudouridine synthase B (308 aa).

Residue Asp-33 is the Nucleophile of the active site.

It belongs to the pseudouridine synthase TruB family. Type 1 subfamily.

It catalyses the reaction uridine(55) in tRNA = pseudouridine(55) in tRNA. In terms of biological role, responsible for synthesis of pseudouridine from uracil-55 in the psi GC loop of transfer RNAs. This Nitrosomonas europaea (strain ATCC 19718 / CIP 103999 / KCTC 2705 / NBRC 14298) protein is tRNA pseudouridine synthase B.